A 394-amino-acid polypeptide reads, in one-letter code: MTKPNHELSPALIVLMSIATGLAVASNYYAQPLLDTIARNFSLSASSAGFIVTAAQLGYAAGLLFLVPLGDMFERRRLIVSMTLLAAGGMLITASSQSLAMMILGTALTGLFSVVAQILVPLAATLASPDKRGKVVGTIMSGLLLGILLARTVAGLLANLGGWRTVFWVASVLMALMALALWRGLPQMKSETHLNYPQLLGSVFSMFISDKILRTRALLGCLTFANFSILWTSMAFLLAAPPFNYSDGVIGLFGLAGAAGALGARPAGGFADKGKSHHTTTFGLLLLLLSWLAIWFGHTSVLALIIGILVLDLTVQGVHITNQTVIYRIHPDARNRLTAGYMTSYFIGGAAGSLISASAWQHGGWAGVCLAGATIALVNLLVWWRGFHRQEAAN.

11 helical membrane-spanning segments follow: residues 10–30 (PALIVLMSIATGLAVASNYYA), 50–70 (FIVTAAQLGYAAGLLFLVPLG), 79–99 (IVSMTLLAAGGMLITASSQSL), 100–120 (AMMILGTALTGLFSVVAQILV), 138–158 (TIMSGLLLGILLARTVAGLLA), 166–186 (VFWVASVLMALMALALWRGLP), 218–238 (LLGCLTFANFSILWTSMAFLL), 243–263 (FNYSDGVIGLFGLAGAAGALG), 291–311 (WLAIWFGHTSVLALIIGILVL), 337–357 (LTAGYMTSYFIGGAAGSLISA), and 364–384 (GWAGVCLAGATIALVNLLVWW).

Belongs to the major facilitator superfamily.

The protein localises to the cell inner membrane. This is an uncharacterized protein from Escherichia coli (strain K12).